A 52-amino-acid polypeptide reads, in one-letter code: Insulin (52 aa).

3 disulfides stabilise this stretch: Cys-7/Cys-38, Cys-19/Cys-51, and Cys-37/Cys-42.

It belongs to the insulin family. In terms of assembly, heterodimer of a B chain and an A chain linked by two disulfide bonds.

Its subcellular location is the secreted. Its function is as follows. Insulin decreases blood glucose concentration. It increases cell permeability to monosaccharides, amino acids and fatty acids. It accelerates glycolysis, the pentose phosphate cycle, and glycogen synthesis in liver. In Polypterus senegalus (Senegal bichir), this protein is Insulin (ins).